Reading from the N-terminus, the 352-residue chain is tRNA pseudouridine synthase D (352 aa).

Catalysis depends on Asp-78, which acts as the Nucleophile. Residues 153-299 (GVPNYYGEQR…LDQDRRPLLL (147 aa)) enclose the TRUD domain.

This sequence belongs to the pseudouridine synthase TruD family.

It catalyses the reaction uridine(13) in tRNA = pseudouridine(13) in tRNA. Functionally, responsible for synthesis of pseudouridine from uracil-13 in transfer RNAs. The sequence is that of tRNA pseudouridine synthase D from Aeromonas salmonicida (strain A449).